We begin with the raw amino-acid sequence, 201 residues long: Orotate phosphoribosyltransferase (201 aa).

A 5-phospho-alpha-D-ribose 1-diphosphate-binding site is contributed by 113-121; that stretch reads EDIITTGKS. Thr-117 and Arg-145 together coordinate orotate.

It belongs to the purine/pyrimidine phosphoribosyltransferase family. PyrE subfamily. In terms of assembly, homodimer. Mg(2+) is required as a cofactor.

The catalysed reaction is orotidine 5'-phosphate + diphosphate = orotate + 5-phospho-alpha-D-ribose 1-diphosphate. It functions in the pathway pyrimidine metabolism; UMP biosynthesis via de novo pathway; UMP from orotate: step 1/2. Catalyzes the transfer of a ribosyl phosphate group from 5-phosphoribose 1-diphosphate to orotate, leading to the formation of orotidine monophosphate (OMP). The protein is Orotate phosphoribosyltransferase of Helicobacter pylori (strain HPAG1).